We begin with the raw amino-acid sequence, 652 residues long: DNA ligase (652 aa).

Residues 29-33, 78-79, and E107 each bind NAD(+); these read DAEYD and SL. The active-site N6-AMP-lysine intermediate is the K109. Positions 130, 164, 278, and 302 each coordinate NAD(+). Zn(2+)-binding residues include C395, C398, C413, and C418. In terms of domain architecture, BRCT spans 577–652; that stretch reads DENAALSGMT…IKDEAWLESL (76 aa).

This sequence belongs to the NAD-dependent DNA ligase family. LigA subfamily. Mg(2+) serves as cofactor. The cofactor is Mn(2+).

The catalysed reaction is NAD(+) + (deoxyribonucleotide)n-3'-hydroxyl + 5'-phospho-(deoxyribonucleotide)m = (deoxyribonucleotide)n+m + AMP + beta-nicotinamide D-nucleotide.. DNA ligase that catalyzes the formation of phosphodiester linkages between 5'-phosphoryl and 3'-hydroxyl groups in double-stranded DNA using NAD as a coenzyme and as the energy source for the reaction. It is essential for DNA replication and repair of damaged DNA. This is DNA ligase from Streptococcus suis (strain 05ZYH33).